The sequence spans 803 residues: Translation initiation factor IF-2 (803 aa).

2 disordered regions span residues 93–123 and 138–206; these read TKPV…LNEK and EVKE…ASAK. A compositionally biased stretch (polar residues) spans 111–121; sequence VPPTSDTTNLN. The span at 138–155 shows a compositional bias: basic and acidic residues; it reads EVKEEAKKTPSEKKETPK. The span at 156-167 shows a compositional bias: basic residues; sequence KGPRKETRRSRK. Over residues 168–188 the composition is skewed to basic and acidic residues; that stretch reads PDKEDKWEREELHMTKLVEER. The tr-type G domain maps to 302–471; sequence PRAPVVTIMG…LLQAEVLELK (170 aa). A G1 region spans residues 311–318; the sequence is GHVDHGKT. 311-318 is a binding site for GTP; the sequence is GHVDHGKT. The interval 336–340 is G2; it reads GITQH. The tract at residues 357-360 is G3; the sequence is DTPG. GTP contacts are provided by residues 357–361 and 411–414; these read DTPGH and NKID. The tract at residues 411–414 is G4; sequence NKID. Residues 447–449 form a G5 region; the sequence is SAK.

Belongs to the TRAFAC class translation factor GTPase superfamily. Classic translation factor GTPase family. IF-2 subfamily.

It is found in the cytoplasm. In terms of biological role, one of the essential components for the initiation of protein synthesis. Protects formylmethionyl-tRNA from spontaneous hydrolysis and promotes its binding to the 30S ribosomal subunits. Also involved in the hydrolysis of GTP during the formation of the 70S ribosomal complex. The protein is Translation initiation factor IF-2 of Coxiella burnetii (strain RSA 493 / Nine Mile phase I).